The primary structure comprises 472 residues: Inhibitor of Apoptosis OPG037 (472 aa).

ANK repeat units lie at residues 97–126 (DGNYPLHIASKINNNRIVAMLLTHGADPNA), 130–161 (HNKTPLYYLSGTDDEVIERINLLVQYGAKINN), 233–263 (DGNTPLHIVCSKTVKNVDIIDLLLPSTDVNK), 267–297 (FGDSPLTLLIKTLSPAHLINKLLSTSNVITD), 322–351 (YDSTDFKMAVEVGSIRCVKYLLDNDIICED), and 353–377 (MYYAVLSEYETMVDYLLFNHFSVDS).

It belongs to the orthopoxvirus OPG037 protein family. As to quaternary structure, may interact with host caspase-9-Apaf-1 complex.

The protein localises to the host cytoplasm. Functionally, inhibits host apoptosis. Acts by associating with host apoptosome. This Homo sapiens (Human) protein is Inhibitor of Apoptosis OPG037 (OPG037).